The following is a 76-amino-acid chain: MYSLLLHLTPRHISPNPDPALHYPMTRLFRQCCPMVWLSHLLLHGVVQHASETYYRIPWPALWSCFFALVFMTEDS.

This is an uncharacterized protein from Magallana gigas (Pacific oyster).